The primary structure comprises 264 residues: MAVVTMRELLDAGVHFGHQTRRWNPKMRRFIFTERNGIYIIDLQQTLTYIDQAFEFVKETVAHGGTVLFVGTKKQAQEAVQVEADRVGMPYVNHRWLGGMLTNFQTVSKRLNRMKELQAMDAAENGYEGRTKREVLMLTRERTKLERVLGGIAEMTRVPSALWIIDTNKEHIAVAEAHKLNIPVVAILDTNCDPDVVDFPVPGNDDAIRSTALLSRVISTAVEEGKKAREERQLAAAKDAAGDAKPEAEEAPVAAEAEEAPAAE.

The disordered stretch occupies residues 225-264 (GKKAREERQLAAAKDAAGDAKPEAEEAPVAAEAEEAPAAE).

The protein belongs to the universal ribosomal protein uS2 family.

This chain is Small ribosomal subunit protein uS2, found in Corynebacterium glutamicum (strain R).